A 528-amino-acid polypeptide reads, in one-letter code: GMP synthase [glutamine-hydrolyzing] (528 aa).

A Glutamine amidotransferase type-1 domain is found at 13 to 204 (SILILDFGSQ…VYKISCCTAD (192 aa)). Cysteine 90 acts as the Nucleophile in catalysis. Active-site residues include histidine 178 and glutamate 180. Positions 205–403 (WTTETYIEET…LGLPDEIIKR (199 aa)) constitute a GMPS ATP-PPase domain. Residue 232–238 (SGGVDSS) participates in ATP binding.

In terms of assembly, homodimer.

The catalysed reaction is XMP + L-glutamine + ATP + H2O = GMP + L-glutamate + AMP + diphosphate + 2 H(+). The protein operates within purine metabolism; GMP biosynthesis; GMP from XMP (L-Gln route): step 1/1. Catalyzes the synthesis of GMP from XMP. In Prochlorococcus marinus (strain AS9601), this protein is GMP synthase [glutamine-hydrolyzing].